We begin with the raw amino-acid sequence, 254 residues long: Type III pantothenate kinase (254 aa).

ATP is bound at residue 13-20 (MIGNTRQH). Substrate-binding positions include tyrosine 84 and 88–91 (GLDR). The active-site Proton acceptor is the aspartate 90. Aspartate 110 is a binding site for K(+). Threonine 113 is an ATP binding site. Threonine 166 is a substrate binding site.

The protein belongs to the type III pantothenate kinase family. Homodimer. NH4(+) serves as cofactor. Requires K(+) as cofactor.

Its subcellular location is the cytoplasm. The enzyme catalyses (R)-pantothenate + ATP = (R)-4'-phosphopantothenate + ADP + H(+). It functions in the pathway cofactor biosynthesis; coenzyme A biosynthesis; CoA from (R)-pantothenate: step 1/5. Its function is as follows. Catalyzes the phosphorylation of pantothenate (Pan), the first step in CoA biosynthesis. In Thermosynechococcus vestitus (strain NIES-2133 / IAM M-273 / BP-1), this protein is Type III pantothenate kinase.